The following is a 69-amino-acid chain: Large ribosomal subunit protein bL31 (69 aa).

Residues Cys-16, Cys-18, Cys-36, and Cys-39 each coordinate Zn(2+).

The protein belongs to the bacterial ribosomal protein bL31 family. Type A subfamily. In terms of assembly, part of the 50S ribosomal subunit. It depends on Zn(2+) as a cofactor.

In terms of biological role, binds the 23S rRNA. The chain is Large ribosomal subunit protein bL31 from Thermosipho africanus (strain TCF52B).